The sequence spans 112 residues: uncharacterized protein (112 aa).

The N-terminal stretch at 1-25 is a signal peptide; it reads MKGTKLAVVVGMTVAAVSLAAPAQA.

This is an uncharacterized protein from Mycobacterium tuberculosis (strain CDC 1551 / Oshkosh).